A 570-amino-acid polypeptide reads, in one-letter code: Guanine nucleotide-binding protein alpha-3 subunit (570 aa).

Residues 10 to 113 (RETLRAYLSK…WIEAIKHAIE (104 aa)) enclose the PH domain. A G-alpha domain is found at 144 to 570 (PVLKLLLLGT…IISKTLEFYC (427 aa)). The tract at residues 147 to 160 (KLLLLGTGESGKST) is G1 motif. 152–159 (GTGESGKS) lines the GTP pocket. Ser159 provides a ligand contact to Mg(2+). Composition is skewed to low complexity over residues 254-272 (NNNS…SSSS) and 290-316 (NSNS…RSNS). Residues 254-321 (NNNSNSSSLK…NRSNSDGSSN (68 aa)) are disordered. The segment at 386 to 394 (DILKSRATT) is G2 motif. GTP is bound by residues 388 to 394 (LKSRATT), 414 to 418 (DVAGQ), 483 to 486 (NKID), and Ala544. Mg(2+) is bound at residue Thr394. Residues 410–419 (FRIVDVAGQR) are G3 motif. The interval 479 to 486 (ILFLNKID) is G4 motif. The segment at 542–547 (TCATDT) is G5 motif.

It belongs to the G-alpha family. As to quaternary structure, g proteins are composed of 3 units; alpha, beta and gamma. The alpha chain contains the guanine nucleotide binding site.

In terms of biological role, guanine nucleotide-binding proteins (G proteins) are involved as modulators or transducers in various transmembrane signaling systems. G alpha-3 plays a role in development. G alpha-3 mutants fail to aggregate. In Dictyostelium discoideum (Social amoeba), this protein is Guanine nucleotide-binding protein alpha-3 subunit (gpaC).